The following is a 310-amino-acid chain: Olfactory receptor 5W2 (310 aa).

Over 1–25 the chain is Extracellular; sequence MDWENCSSLTDFFLLGITNNPEMKV. A glycan (N-linked (GlcNAc...) asparagine) is linked at Asn-5. Residues 26-46 form a helical membrane-spanning segment; it reads TLFAVFLAVYIINFSANLGMI. Over 47-54 the chain is Cytoplasmic; it reads VLIRMDYQ. Residues 55–75 form a helical membrane-spanning segment; that stretch reads LHTPMYFFLSHLSFCDLCYST. Topologically, residues 76 to 99 are extracellular; that stretch reads ATGPKMLVDLLAKNKSIPFYGCAL. The chain crosses the membrane as a helical span at residues 100-120; it reads QFLVFCIFADSECLLLSVMAF. The Cytoplasmic portion of the chain corresponds to 121 to 139; sequence DRYKAIINPLLYTVNMSSR. Residues 140–160 traverse the membrane as a helical segment; it reads VCYLLLTGVYLVGIADALIHM. Residues 161-196 are Extracellular-facing; the sequence is TLAFRLCFCGSNEINHFFCDIPPLLLLSRSDTQVNE. Residues 197–217 form a helical membrane-spanning segment; that stretch reads LVLFTVFGFIELSTISGVFIS. Residues 218–237 are Cytoplasmic-facing; it reads YCYIILSVLEIHSAEGRFKA. The helical transmembrane segment at 238–258 threads the bilayer; it reads LSTCTSHLSAVAIFQGTLLFM. Topologically, residues 259–271 are extracellular; it reads YFRPSSSYSLDQD. A helical membrane pass occupies residues 272-292; the sequence is KMTSLFYTLVVPMLNPLIYSL. The Cytoplasmic segment spans residues 293–310; the sequence is RNKDVKEALKKLKNKILF.

Belongs to the G-protein coupled receptor 1 family.

The protein localises to the cell membrane. Odorant receptor. The sequence is that of Olfactory receptor 5W2 (OR5W2) from Homo sapiens (Human).